The chain runs to 187 residues: Dirigent protein 23 (187 aa).

The signal sequence occupies residues 1-24 (MAKEEYVSRMLVMLIMIMPLVAQG). Asn182 carries an N-linked (GlcNAc...) asparagine glycan.

The protein belongs to the plant dirigent protein family. Homodimer.

Its subcellular location is the secreted. The protein resides in the extracellular space. The protein localises to the apoplast. Its function is as follows. Dirigent proteins impart stereoselectivity on the phenoxy radical-coupling reaction, yielding optically active lignans from two molecules of coniferyl alcohol in the biosynthesis of lignans, flavonolignans, and alkaloids and thus plays a central role in plant secondary metabolism. The sequence is that of Dirigent protein 23 (DIR23) from Arabidopsis thaliana (Mouse-ear cress).